The primary structure comprises 255 residues: Octanoyltransferase (255 aa).

Residues 54 to 238 (GDAAELVWLL…AFTEIFGATV (185 aa)) enclose the BPL/LPL catalytic domain. Substrate-binding positions include 92 to 99 (RGGQLTYH), 167 to 169 (AIG), and 180 to 182 (GIA). C198 functions as the Acyl-thioester intermediate in the catalytic mechanism.

It belongs to the LipB family.

The protein localises to the cytoplasm. It catalyses the reaction octanoyl-[ACP] + L-lysyl-[protein] = N(6)-octanoyl-L-lysyl-[protein] + holo-[ACP] + H(+). The protein operates within protein modification; protein lipoylation via endogenous pathway; protein N(6)-(lipoyl)lysine from octanoyl-[acyl-carrier-protein]: step 1/2. Catalyzes the transfer of endogenously produced octanoic acid from octanoyl-acyl-carrier-protein onto the lipoyl domains of lipoate-dependent enzymes. Lipoyl-ACP can also act as a substrate although octanoyl-ACP is likely to be the physiological substrate. This is Octanoyltransferase from Rhodopseudomonas palustris (strain HaA2).